Here is a 237-residue protein sequence, read N- to C-terminus: Phosphoribosylaminoimidazole-succinocarboxamide synthase (237 aa).

It belongs to the SAICAR synthetase family.

The enzyme catalyses 5-amino-1-(5-phospho-D-ribosyl)imidazole-4-carboxylate + L-aspartate + ATP = (2S)-2-[5-amino-1-(5-phospho-beta-D-ribosyl)imidazole-4-carboxamido]succinate + ADP + phosphate + 2 H(+). It participates in purine metabolism; IMP biosynthesis via de novo pathway; 5-amino-1-(5-phospho-D-ribosyl)imidazole-4-carboxamide from 5-amino-1-(5-phospho-D-ribosyl)imidazole-4-carboxylate: step 1/2. This is Phosphoribosylaminoimidazole-succinocarboxamide synthase from Deinococcus deserti (strain DSM 17065 / CIP 109153 / LMG 22923 / VCD115).